Reading from the N-terminus, the 225-residue chain is Holliday junction branch migration complex subunit RuvA (225 aa).

The tract at residues 1-71 (MISWINGDLV…EDSDLLFGFT (71 aa)) is domain I. Residues 72 to 150 (SNEQKNFFIE…SEILSEEEKS (79 aa)) are domain II. A flexible linker region spans residues 151-161 (KGELEIKDPEI). A domain III region spans residues 161-225 (INKMIEDLQL…LDEDSSNIAR (65 aa)).

It belongs to the RuvA family. In terms of assembly, homotetramer. Forms an RuvA(8)-RuvB(12)-Holliday junction (HJ) complex. HJ DNA is sandwiched between 2 RuvA tetramers; dsDNA enters through RuvA and exits via RuvB. An RuvB hexamer assembles on each DNA strand where it exits the tetramer. Each RuvB hexamer is contacted by two RuvA subunits (via domain III) on 2 adjacent RuvB subunits; this complex drives branch migration. In the full resolvosome a probable DNA-RuvA(4)-RuvB(12)-RuvC(2) complex forms which resolves the HJ.

It is found in the cytoplasm. The RuvA-RuvB-RuvC complex processes Holliday junction (HJ) DNA during genetic recombination and DNA repair, while the RuvA-RuvB complex plays an important role in the rescue of blocked DNA replication forks via replication fork reversal (RFR). RuvA specifically binds to HJ cruciform DNA, conferring on it an open structure. The RuvB hexamer acts as an ATP-dependent pump, pulling dsDNA into and through the RuvAB complex. HJ branch migration allows RuvC to scan DNA until it finds its consensus sequence, where it cleaves and resolves the cruciform DNA. In Prochlorococcus marinus (strain MIT 9301), this protein is Holliday junction branch migration complex subunit RuvA.